A 393-amino-acid polypeptide reads, in one-letter code: Formate-dependent phosphoribosylglycinamide formyltransferase (393 aa).

N(1)-(5-phospho-beta-D-ribosyl)glycinamide is bound by residues 22-23 (EL) and Glu82. Residues Arg114, Lys155, 160 to 165 (SSGKGQ), 195 to 198 (EGFV), and Glu203 contribute to the ATP site. In terms of domain architecture, ATP-grasp spans 119–308 (RLAAEELGLP…EFALHARAIL (190 aa)). Positions 267 and 279 each coordinate Mg(2+). N(1)-(5-phospho-beta-D-ribosyl)glycinamide is bound by residues Asp286, Lys356, and 363–364 (RR).

This sequence belongs to the PurK/PurT family. As to quaternary structure, homodimer.

The enzyme catalyses N(1)-(5-phospho-beta-D-ribosyl)glycinamide + formate + ATP = N(2)-formyl-N(1)-(5-phospho-beta-D-ribosyl)glycinamide + ADP + phosphate + H(+). It functions in the pathway purine metabolism; IMP biosynthesis via de novo pathway; N(2)-formyl-N(1)-(5-phospho-D-ribosyl)glycinamide from N(1)-(5-phospho-D-ribosyl)glycinamide (formate route): step 1/1. Its function is as follows. Involved in the de novo purine biosynthesis. Catalyzes the transfer of formate to 5-phospho-ribosyl-glycinamide (GAR), producing 5-phospho-ribosyl-N-formylglycinamide (FGAR). Formate is provided by PurU via hydrolysis of 10-formyl-tetrahydrofolate. In Nitratidesulfovibrio vulgaris (strain DSM 19637 / Miyazaki F) (Desulfovibrio vulgaris), this protein is Formate-dependent phosphoribosylglycinamide formyltransferase.